The chain runs to 3625 residues: Cubilin (3625 aa).

A signal peptide spans 1–20 (MVNNMSLLFLWSLVIFLTFA). Residues 21-36 (ESYGEAGGPELQRHKR) constitute a propeptide, removed in mature form. The interval 43 to 50 (PRMAAERG) is interaction with AMN. Residue N106 is glycosylated (N-linked (GlcNAc...) asparagine). Residues 133–169 (DGKVCSSNPCQNGATCLNLHDSFFCICPSQWKGPLCS) form the EGF-like 1 domain. 6 disulfide bridges follow: C137-C148, C142-C157, C159-C168, C175-C191, C185-C200, and C202-C211. One can recognise an EGF-like 2; calcium-binding domain in the interval 171–212 (DVNECEIYSGTPLGCQNGATCINTPGSYSCLCSPETHGPQCA). Residue N257 is glycosylated (N-linked (GlcNAc...) asparagine). In terms of domain architecture, EGF-like 3; calcium-binding spans 264–305 (DRDECSSWPAPCSALVPCFNTLGSFYCGACPTGWQGNGYICE). Intrachain disulfides connect C268-C281, C275-C290, C293-C304, C310-C325, C317-C334, C337-C348, C354-C367, C361-C377, C379-C393, C400-C410, C405-C419, C421-C430, C437-C448, C442-C457, C459-C468, C475-C501, C528-C550, C591-C617, C644-C666, and C709-C734. The EGF-like 4; calcium-binding domain occupies 306 to 349 (DINECEINNGGCSVAPPVECVNTPGSYYCPSCPPGYQGDGRMCT). EGF-like domains lie at 350–394 (LIDL…HGCV) and 396–431 (LSNV…MNCT). N429 is a glycosylation site (N-linked (GlcNAc...) asparagine). The EGF-like 7; calcium-binding domain maps to 433–469 (NINECLSNPCLNGGTCVDGINAFSCECTRFWTGSLCH). 27 CUB domains span residues 475-587 (CGGT…WETR), 591-703 (CGGV…YLTT), 709-816 (CGGN…YQVA), 817-928 (CGGE…FSTE), 932-1042 (CGEI…YEAT), 1045-1163 (SAGN…WDGS), 1167-1279 (CGGN…YQQT), 1280-1391 (CDNV…WLVH), 1393-1508 (CGGE…WRAV), 1512-1621 (CGGI…FRQA), 1622-1736 (CGGH…YVAS), 1740-1852 (CGGI…FNNI), 1854-1965 (GNDH…WFAM), 1980-2093 (CGGF…FHKS), 2094-2215 (CGGY…YEAK), 2219-2336 (CGGN…YSIA), 2338-2450 (CGGT…FDSS), 2454-2567 (CGGD…YTSS), 2572-2689 (CGGS…YSFT), 2691-2803 (CGGI…WNTE), 2807-2921 (CGGI…FLSR), 2922-3037 (CGRN…YRIT), 3039-3152 (CGGT…FRET), 3159-3276 (CGGY…YTLL), 3280-3397 (CGGT…IAGC), 3397-3509 (CSRE…WTSS), and 3513-3625 (CGGT…TWAS). N712 and N749 each carry an N-linked (GlcNAc...) asparagine glycan. C761 and C779 are disulfide-bonded. N781 carries N-linked (GlcNAc...) asparagine glycosylation. A disulfide bridge connects residues C817 and C842. An N-linked (GlcNAc...) asparagine glycan is attached at N857. 2 disulfides stabilise this stretch: C869–C891 and C932–C958. N-linked (GlcNAc...) asparagine glycosylation occurs at N957. Position 980 (E980) interacts with Ca(2+). Residue N984 is glycosylated (N-linked (GlcNAc...) asparagine). C985 and C1005 are disulfide-bonded. 4 residues coordinate Ca(2+): D988, D1027, D1029, and L1030. The N-linked (GlcNAc...) asparagine glycan is linked to N1048. Ca(2+)-binding residues include E1097, D1107, and D1148. An intrachain disulfide couples C1104 to C1126. C1167 and C1193 form a disulfide bridge. N-linked (GlcNAc...) asparagine glycosylation occurs at N1170. E1215 contributes to the Ca(2+) binding site. The N-linked (GlcNAc...) asparagine glycan is linked to N1219. C1220 and C1242 form a disulfide bridge. Ca(2+) is bound by residues D1223, D1264, G1266, and Q1267. A disulfide bond links C1280 and C1308. N-linked (GlcNAc...) asparagine glycans are attached at residues N1287, N1309, and N1321. E1330 contributes to the Ca(2+) binding site. N-linked (GlcNAc...) asparagine glycosylation occurs at N1334. A disulfide bridge links C1335 with C1353. Positions 1338, 1375, and 1377 each coordinate Ca(2+). 2 disulfide bridges follow: C1393-C1419 and C1446-C1468. N-linked (GlcNAc...) asparagine glycosylation is present at N1502. A disulfide bond links C1512 and C1538. N1553 carries N-linked (GlcNAc...) asparagine glycosylation. Cystine bridges form between C1565–C1583, C1622–C1649, C1677–C1699, C1740–C1766, and C1793–C1814. N-linked (GlcNAc...) asparagine glycosylation occurs at N1648. 3 N-linked (GlcNAc...) asparagine glycosylation sites follow: N1804, N1821, and N1887. 3 disulfide bridges follow: C1907-C1929, C1980-C2008, and C2034-C2056. N2087 and N2119 each carry an N-linked (GlcNAc...) asparagine glycan. 2 disulfides stabilise this stretch: C2094-C2120 and C2219-C2249. N-linked (GlcNAc...) asparagine glycosylation occurs at N2276. Intrachain disulfides connect C2277–C2299 and C2338–C2365. N-linked (GlcNAc...) asparagine glycans are attached at residues N2388 and N2402. 3 disulfides stabilise this stretch: C2392/C2413, C2454/C2480, and C2507/C2529. N2533, N2583, N2594, and N2612 each carry an N-linked (GlcNAc...) asparagine glycan. C2572 and C2601 are disulfide-bonded. Cystine bridges form between C2630/C2651, C2691/C2717, C2744/C2766, C2807/C2833, and C2862/C2885. N2887, N2925, N2928, and N2947 each carry an N-linked (GlcNAc...) asparagine glycan. Cystine bridges form between C2922/C2948 and C2979/C3001. T3010 is subject to Phosphothreonine. 2 disulfides stabilise this stretch: C3039–C3066 and C3093–C3115. N-linked (GlcNAc...) asparagine glycans are attached at residues N3044, N3105, and N3127. Intrachain disulfides connect C3159-C3187 and C3217-C3239. N-linked (GlcNAc...) asparagine glycans are attached at residues N3270 and N3285. 2 cysteine pairs are disulfide-bonded: C3280-C3308 and C3334-C3356. N3359 carries N-linked (GlcNAc...) asparagine glycosylation. A disulfide bridge connects residues C3397 and C3423. N3432, N3459, and N3535 each carry an N-linked (GlcNAc...) asparagine glycan. 3 disulfide bridges follow: C3450-C3472, C3513-C3539, and C3566-C3588.

Interacts with AMN. Component of the cubam complex composed of one CUBN trimer and one AMN chain. The cubam complex can dimerize. Interacts with LRP2 in a dual-receptor complex in a calcium-dependent manner. Found in a complex with PID1/PCLI1, LRP1 and CUBNI. Interacts with LRP1 and PID1/PCLI1. Post-translationally, the precursor is cleaved by a trans-Golgi proteinase furin, removing a propeptide. In terms of processing, N-glycosylated. In terms of tissue distribution, detected in kidney cortex (at protein level).

It is found in the apical cell membrane. The protein resides in the cell membrane. Its subcellular location is the membrane. The protein localises to the coated pit. It localises to the endosome. It is found in the lysosome membrane. In terms of biological role, endocytic receptor which plays a role in lipoprotein, vitamin and iron metabolism by facilitating their uptake. Acts together with LRP2 to mediate endocytosis of high-density lipoproteins, GC, hemoglobin, ALB, TF and SCGB1A1. Acts together with AMN to mediate endocytosis of the CBLIF-cobalamin complex. Binds to ALB, MB, Kappa and lambda-light chains, TF, hemoglobin, GC, SCGB1A1, APOA1, high density lipoprotein, and the CBLIF-cobalamin complex. Ligand binding requires calcium. Serves as important transporter in several absorptive epithelia, including intestine, renal proximal tubules and embryonic yolk sac. May play an important role in the development of the peri-implantation embryo through internalization of APOA1 and cholesterol. Binds to LGALS3 at the maternal-fetal interface. The protein is Cubilin (CUBN) of Sus scrofa (Pig).